Reading from the N-terminus, the 112-residue chain is UPF0145 protein Acid_4599 (112 aa).

This sequence belongs to the UPF0145 family.

The chain is UPF0145 protein Acid_4599 from Solibacter usitatus (strain Ellin6076).